The sequence spans 337 residues: Protein-methionine-sulfoxide reductase catalytic subunit MsrP (337 aa).

The tat-type signal signal peptide spans 1–48 (MLIKIPSRSDCSESEVTSETLYLSRRRLLGASFAGLALASGLPRLGFA). Mo-molybdopterin-binding positions include asparagine 94, 97-98 (YE), cysteine 152, threonine 187, asparagine 237, arginine 242, and 253-255 (SIK).

Belongs to the MsrP family. As to quaternary structure, heterodimer of a catalytic subunit (MsrP) and a heme-binding subunit (MsrQ). It depends on Mo-molybdopterin as a cofactor. Post-translationally, predicted to be exported by the Tat system. The position of the signal peptide cleavage has not been experimentally proven.

It localises to the periplasm. The catalysed reaction is L-methionyl-[protein] + a quinone + H2O = L-methionyl-(S)-S-oxide-[protein] + a quinol. It carries out the reaction L-methionyl-[protein] + a quinone + H2O = L-methionyl-(R)-S-oxide-[protein] + a quinol. Its function is as follows. Part of the MsrPQ system that repairs oxidized periplasmic proteins containing methionine sulfoxide residues (Met-O), using respiratory chain electrons. Thus protects these proteins from oxidative-stress damage caused by reactive species of oxygen and chlorine generated by the host defense mechanisms. MsrPQ is essential for the maintenance of envelope integrity under bleach stress, rescuing a wide series of structurally unrelated periplasmic proteins from methionine oxidation. The catalytic subunit MsrP is non-stereospecific, being able to reduce both (R-) and (S-) diastereoisomers of methionine sulfoxide. The sequence is that of Protein-methionine-sulfoxide reductase catalytic subunit MsrP from Pseudomonas aeruginosa (strain ATCC 15692 / DSM 22644 / CIP 104116 / JCM 14847 / LMG 12228 / 1C / PRS 101 / PAO1).